A 327-amino-acid chain; its full sequence is Delta(6)-protoilludene synthase HYPSUDRAFT_138665 (327 aa).

Positions 79, 215, 219, and 223 each coordinate Mg(2+). A DDXXD motif motif is present at residues 79 to 83; the sequence is DEHTD. (2E,6E)-farnesyl diphosphate contacts are provided by arginine 304 and tyrosine 305.

It belongs to the terpene synthase family. Requires Mg(2+) as cofactor.

It carries out the reaction (2E,6E)-farnesyl diphosphate = Delta(6)-protoilludene + diphosphate. Functionally, terpene cyclase that catalyzes the cyclization of farnesyl diphosphate (FPP) to delta(6)-protoilludene. This Hypholoma sublateritium (strain FD-334 SS-4) protein is Delta(6)-protoilludene synthase HYPSUDRAFT_138665.